Here is a 650-residue protein sequence, read N- to C-terminus: Acetyl-coenzyme A synthetase (650 aa).

CoA-binding positions include R191–R194, T311, and N335. ATP contacts are provided by residues G387–P389, D411–T416, D500, and R515. S523 is a binding site for CoA. R526 lines the ATP pocket. The Mg(2+) site is built by V537, H539, and V542. A CoA-binding site is contributed by R584. K609 carries the N6-acetyllysine modification.

The protein belongs to the ATP-dependent AMP-binding enzyme family. Mg(2+) serves as cofactor. Post-translationally, acetylated. Deacetylation by the SIR2-homolog deacetylase activates the enzyme.

It catalyses the reaction acetate + ATP + CoA = acetyl-CoA + AMP + diphosphate. Catalyzes the conversion of acetate into acetyl-CoA (AcCoA), an essential intermediate at the junction of anabolic and catabolic pathways. AcsA undergoes a two-step reaction. In the first half reaction, AcsA combines acetate with ATP to form acetyl-adenylate (AcAMP) intermediate. In the second half reaction, it can then transfer the acetyl group from AcAMP to the sulfhydryl group of CoA, forming the product AcCoA. In Shewanella sp. (strain ANA-3), this protein is Acetyl-coenzyme A synthetase.